Reading from the N-terminus, the 519-residue chain is Ent-kaurene oxidase (519 aa).

At 1–10 (MDTLLSLQAV) the chain is on the chloroplast intermembrane side. The helical transmembrane segment at 11–31 (PAAAAIGGPVVAIGGITLFFI) threads the bilayer. The Cytoplasmic segment spans residues 32 to 519 (REYVKDQRKK…PRLRDRVCVS (488 aa)). Heme is bound at residue C458.

The protein belongs to the cytochrome P450 family. The cofactor is heme.

It localises to the plastid. Its subcellular location is the chloroplast outer membrane. It catalyses the reaction ent-kaur-16-ene + 3 reduced [NADPH--hemoprotein reductase] + 3 O2 = ent-kaur-16-en-19-oate + 3 oxidized [NADPH--hemoprotein reductase] + 4 H2O + 4 H(+). Its pathway is plant hormone biosynthesis; gibberellin biosynthesis. Functionally, catalyzes three successive oxidations of the 4-methyl group of ent-kaurene giving kaurenoic acid, a key step in gibberellins (GAs) biosynthesis. GAs, which are involved many processes, including stem elongation, play a central role in plant development. In Salvia miltiorrhiza (Chinese sage), this protein is Ent-kaurene oxidase.